The chain runs to 317 residues: Probable cell division protein WhiA (317 aa).

The H-T-H motif DNA-binding region spans 281-314 (SLKELGQMLDPPVGKSGINHRLRRIEKIAEELRK).

This sequence belongs to the WhiA family.

In terms of biological role, involved in cell division and chromosome segregation. The protein is Probable cell division protein WhiA of Clostridium novyi (strain NT).